Consider the following 149-residue polypeptide: Large-conductance mechanosensitive channel (149 aa).

2 helical membrane-spanning segments follow: residues 8–28 and 74–94; these read FIMRGSVLDLAVGVVIGSAFT and IGSVISALITFLITAFVLFLI.

Belongs to the MscL family. Homopentamer.

The protein localises to the cell membrane. In terms of biological role, channel that opens in response to stretch forces in the membrane lipid bilayer. May participate in the regulation of osmotic pressure changes within the cell. The sequence is that of Large-conductance mechanosensitive channel from Enterococcus faecalis (strain ATCC 700802 / V583).